Here is a 128-residue protein sequence, read N- to C-terminus: Putative protein SEM1, isoform 2 (128 aa).

A compositionally biased stretch (basic residues) spans Lys-22–Ser-32. Positions Lys-22 to Gly-42 are disordered.

This Homo sapiens (Human) protein is Putative protein SEM1, isoform 2.